We begin with the raw amino-acid sequence, 292 residues long: Phosphatidylserine decarboxylase proenzyme (292 aa).

Catalysis depends on charge relay system; for autoendoproteolytic cleavage activity residues aspartate 89, histidine 146, and serine 252. Residue serine 252 is the Schiff-base intermediate with substrate; via pyruvic acid; for decarboxylase activity of the active site. Pyruvic acid (Ser); by autocatalysis is present on serine 252.

Belongs to the phosphatidylserine decarboxylase family. PSD-B subfamily. Prokaryotic type I sub-subfamily. Heterodimer of a large membrane-associated beta subunit and a small pyruvoyl-containing alpha subunit. The cofactor is pyruvate. Is synthesized initially as an inactive proenzyme. Formation of the active enzyme involves a self-maturation process in which the active site pyruvoyl group is generated from an internal serine residue via an autocatalytic post-translational modification. Two non-identical subunits are generated from the proenzyme in this reaction, and the pyruvate is formed at the N-terminus of the alpha chain, which is derived from the carboxyl end of the proenzyme. The autoendoproteolytic cleavage occurs by a canonical serine protease mechanism, in which the side chain hydroxyl group of the serine supplies its oxygen atom to form the C-terminus of the beta chain, while the remainder of the serine residue undergoes an oxidative deamination to produce ammonia and the pyruvoyl prosthetic group on the alpha chain. During this reaction, the Ser that is part of the protease active site of the proenzyme becomes the pyruvoyl prosthetic group, which constitutes an essential element of the active site of the mature decarboxylase.

The protein resides in the cell membrane. It carries out the reaction a 1,2-diacyl-sn-glycero-3-phospho-L-serine + H(+) = a 1,2-diacyl-sn-glycero-3-phosphoethanolamine + CO2. It participates in phospholipid metabolism; phosphatidylethanolamine biosynthesis; phosphatidylethanolamine from CDP-diacylglycerol: step 2/2. Functionally, catalyzes the formation of phosphatidylethanolamine (PtdEtn) from phosphatidylserine (PtdSer). This Shewanella sp. (strain MR-7) protein is Phosphatidylserine decarboxylase proenzyme.